The primary structure comprises 216 residues: Glutathione S-transferase D5 (216 aa).

Positions 1–80 constitute a GST N-terminal domain; that stretch reads MDFYYSPRGS…YLVEKYGKDD (80 aa). Glutathione contacts are provided by residues 50–52 and 64–66; these read HTI and ESR. The 122-residue stretch at 86–207 folds into the GST C-terminal domain; it reads DPKKQALVNQ…KGAVELKGVF (122 aa).

Belongs to the GST superfamily. Delta family. Homodimer.

It carries out the reaction RX + glutathione = an S-substituted glutathione + a halide anion + H(+). Conjugation of reduced glutathione to a wide number of exogenous and endogenous hydrophobic electrophiles. May be involved in detoxification. This Drosophila melanogaster (Fruit fly) protein is Glutathione S-transferase D5.